Here is a 1301-residue protein sequence, read N- to C-terminus: DNA-directed RNA polymerase subunit beta (1301 aa).

The protein belongs to the RNA polymerase beta chain family. In terms of assembly, the RNAP catalytic core consists of 2 alpha, 1 beta, 1 beta' and 1 omega subunit. When a sigma factor is associated with the core the holoenzyme is formed, which can initiate transcription.

It catalyses the reaction RNA(n) + a ribonucleoside 5'-triphosphate = RNA(n+1) + diphosphate. Functionally, DNA-dependent RNA polymerase catalyzes the transcription of DNA into RNA using the four ribonucleoside triphosphates as substrates. In Chlorobium luteolum (strain DSM 273 / BCRC 81028 / 2530) (Pelodictyon luteolum), this protein is DNA-directed RNA polymerase subunit beta.